We begin with the raw amino-acid sequence, 369 residues long: Peptidyl-prolyl cis-trans isomerase D (369 aa).

A PPIase cyclophilin-type domain is found at 7–175 (YFDISCNGKP…EDWKIADCGE (169 aa)). TPR repeat units follow at residues 217–250 (VSKI…LNDY), 268–301 (LSCY…EQID), and 306–339 (TKAL…EPND).

This sequence belongs to the cyclophilin-type PPIase family. PPIase D subfamily.

It is found in the cytoplasm. It carries out the reaction [protein]-peptidylproline (omega=180) = [protein]-peptidylproline (omega=0). Functionally, PPIases accelerate the folding of proteins. It catalyzes the cis-trans isomerization of proline imidic peptide bonds in oligopeptides. This chain is Peptidyl-prolyl cis-trans isomerase D (CPR6), found in Candida albicans (strain SC5314 / ATCC MYA-2876) (Yeast).